We begin with the raw amino-acid sequence, 425 residues long: Proteinase-activated receptor 1 (425 aa).

The first 21 residues, 1-21 (MGPRRLLLVAACFSLCGPLLS), serve as a signal peptide directing secretion. Residues 22–41 (ARTRARRPESKATNATLDPR) constitute a propeptide that is removed on maturation. 3 N-linked (GlcNAc...) asparagine glycosylation sites follow: asparagine 35, asparagine 62, and asparagine 75. The Extracellular segment spans residues 42–102 (SFLLRNPNDK…SGYLTSSWLT (61 aa)). Residues 103-128 (LFVPSVYTGVFVVSLPLNIMAIVVFI) form a helical membrane-spanning segment. Topologically, residues 129–137 (LKMKVKKPA) are cytoplasmic. A helical transmembrane segment spans residues 138–157 (VVYMLHLATADVLFVSVLPF). Residues 158–176 (KISYYFSGSDWQFGSELCR) lie on the Extracellular side of the membrane. Cysteine 175 and cysteine 254 are disulfide-bonded. A helical membrane pass occupies residues 177-198 (FVTAAFYCNMYASILLMTVISI). Residues 199 to 218 (DRFLAVVYPMQSLSWRTLGR) are Cytoplasmic-facing. The chain crosses the membrane as a helical span at residues 219 to 239 (ASFTCLAIWALAIAGVVPLLL). The Extracellular segment spans residues 240-268 (KEQTIQVPGLNITTCHDVLNETLLEGYYA). N-linked (GlcNAc...) asparagine glycosylation is found at asparagine 250 and asparagine 259. Residues 269 to 288 (YYFSAFSAVFFFVPLIISTV) traverse the membrane as a helical segment. Residues 289–311 (CYVSIIRCLSSSAVANRSKKSRA) lie on the Cytoplasmic side of the membrane. The chain crosses the membrane as a helical span at residues 312 to 334 (LFLSAAVFCIFIICFGPTNVLLI). The Extracellular segment spans residues 335–350 (AHYSFLSHTSTTEAAY). Residues 351-374 (FAYLLCVCVSSISCCIDPLIYYYA) traverse the membrane as a helical segment. The Cytoplasmic portion of the chain corresponds to 375-425 (SSECQRYVYSILCCKESSDPSSYNSSGQLMASKMDTCSSNLNNSIYKKLLT). At serine 418 the chain carries Phosphoserine.

Belongs to the G-protein coupled receptor 1 family. Proteolytic cleavage by thrombin generates a new N-terminus that functions as a tethered ligand. Also proteolytically cleaved by cathepsin CTSG. Cleavage at 41-Arg-|-Ser-42 by CTSG results in receptor activation while cleavage at 55-Phe-|-Trp-56 results in inhibition of receptor activation. In terms of processing, phosphorylated in the C-terminal tail; probably mediating desensitization prior to the uncoupling and internalization of the receptor. Platelets and vascular endothelial cells.

It is found in the cell membrane. High affinity receptor that binds the activated thrombin, leading to calcium release from intracellular stores. The thrombin-activated receptor signaling pathway is mediated through PTX-insensitive G proteins, activation of phospholipase C resulting in the production of 1D-myo-inositol 1,4,5-trisphosphate (InsP3) which binds to InsP3 receptors causing calcium release from the stores. In astrocytes, the calcium released into the cytosol allows the Ca(2+)-dependent release of L-glutamate into the synaptic cleft through BEST1, that targets the neuronal postsynaptic GRIN2A/NMDAR receptor resulting in the synaptic plasticity regulation. May play a role in platelets activation and in vascular development. Mediates up-regulation of pro-inflammatory cytokines, such as MCP-1/CCL2 and IL6, triggered by coagulation factor Xa (F10) in cardiac fibroblasts and umbilical vein endothelial cells. This Homo sapiens (Human) protein is Proteinase-activated receptor 1.